An 815-amino-acid chain; its full sequence is RNA-binding protein 5 (815 aa).

Residues 1–93 form a disordered region; it reads MGSDKRVSRT…EHDYRHDISD (93 aa). Phosphoserine occurs at positions 18, 59, 69, 72, and 78. The RRM 1 domain maps to 98–178; sequence KTIMLRGLPI…KHIAMHYSNP (81 aa). The RanBP2-type zinc-finger motif lies at 181–210; that stretch reads KFEDWLCNKCCLNNFRKRLKCFRCGADKFD. The RRM 2 domain occupies 231–315; it reads DTIILRNIAP…KTIGVDFAKS (85 aa). Residues 321–809 form a required for interaction with U2AF2 region; the sequence is VLSDGNRVSA…KDAVRKAMFA (489 aa). Residues 411-422 are compositionally biased toward polar residues; that stretch reads QSPQLYNQTSNP. Disordered regions lie at residues 411–468 and 507–540; these read QSPQ…DESS and PAAESSSHQQSGLPPAKEGKEKKEKPKSKTAQQI. Low complexity predominate over residues 426-446; sequence PTEEAQPSTSTSTQAPAASPT. Ser444 is subject to Phosphoserine. Positions 452 to 535 are sufficient for interaction with ACIN1, PRPF8, SFRS3, SNRPB, SNRPN, SNRNP70 and SNRNP200; sequence TKYAVPDTST…KEKKEKPKSK (84 aa). Ser621 and Ser624 each carry phosphoserine. A C2H2-type; atypical zinc finger spans residues 647–677; the sequence is MACLLCRRQFPNKDALVRHQQLSDLHKQNMD. The region spanning 743–789 is the G-patch domain; that stretch reads HSNIGNKMLQAMGWREGSGLGRKCQGITAPIEAQVRLKGAGLGAKGS.

This sequence belongs to the RBM5/RBM10 family. As to quaternary structure, component of the spliceosome A complex (also known as the prespliceosome). Appears to dissociate from the spliceosome upon formation of the spliceosome B complex (also known as the precatalytic spliceosome), in which the heterotrimeric U4/U6.U5 snRNPs are bound. Interacts with U2AF2; this interaction is direct. Also interacts with ACIN1, PRPF8, SFRS3, SNRPB, SNRPN, SNRNP70 and SNRNP200; these interactions may be indirect. As to expression, isoform 5 is widely expressed in normal tissues and is expressed at increased levels in T-leukemic cell lines.

Its subcellular location is the nucleus. In terms of biological role, component of the spliceosome A complex. Binds to ssRNA containing the consensus sequence 5'-AGGUAA-3'. Regulates alternative splicing of a number of mRNAs. May modulate splice site pairing after recruitment of the U1 and U2 snRNPs to the 5' and 3' splice sites of the intron. May both positively and negatively regulate apoptosis by regulating the alternative splicing of several genes involved in this process, including FAS and CASP2/caspase-2. In the case of FAS, promotes exclusion of exon 6 thereby producing a soluble form of FAS that inhibits apoptosis. In the case of CASP2/caspase-2, promotes exclusion of exon 9 thereby producing a catalytically active form of CASP2/Caspase-2 that induces apoptosis. In Homo sapiens (Human), this protein is RNA-binding protein 5 (RBM5).